The chain runs to 527 residues: Bifunctional purine biosynthesis protein PurH (527 aa).

An MGS-like domain is found at 9–156 (MARKPIRRAL…KNHPSVAVVT (148 aa)).

Belongs to the PurH family.

It catalyses the reaction (6R)-10-formyltetrahydrofolate + 5-amino-1-(5-phospho-beta-D-ribosyl)imidazole-4-carboxamide = 5-formamido-1-(5-phospho-D-ribosyl)imidazole-4-carboxamide + (6S)-5,6,7,8-tetrahydrofolate. It carries out the reaction IMP + H2O = 5-formamido-1-(5-phospho-D-ribosyl)imidazole-4-carboxamide. The protein operates within purine metabolism; IMP biosynthesis via de novo pathway; 5-formamido-1-(5-phospho-D-ribosyl)imidazole-4-carboxamide from 5-amino-1-(5-phospho-D-ribosyl)imidazole-4-carboxamide (10-formyl THF route): step 1/1. It participates in purine metabolism; IMP biosynthesis via de novo pathway; IMP from 5-formamido-1-(5-phospho-D-ribosyl)imidazole-4-carboxamide: step 1/1. This is Bifunctional purine biosynthesis protein PurH from Mycobacterium leprae (strain Br4923).